A 216-amino-acid polypeptide reads, in one-letter code: Protein Syd (216 aa).

Belongs to the Syd family.

The protein resides in the cell inner membrane. In terms of biological role, interacts with the SecY protein in vivo. May bind preferentially to an uncomplexed state of SecY, thus functioning either as a chelating agent for excess SecY in the cell or as a regulatory factor that negatively controls the translocase function. This chain is Protein Syd, found in Shewanella baltica (strain OS195).